Here is a 150-residue protein sequence, read N- to C-terminus: Suppressor of HU sensitivity involved in recombination protein 1 (150 aa).

Component of the SHU complex composed of at least CSM2, PSY3, SHU1 and SHU2.

The protein localises to the nucleus. Functionally, plays a role in a RAD51/RAD54-dependent homologous recombination repair (HRR) pathway to repair MMS-induced lesions during S-phase. The protein is Suppressor of HU sensitivity involved in recombination protein 1 (SHU1) of Saccharomyces cerevisiae (strain ATCC 204508 / S288c) (Baker's yeast).